The chain runs to 197 residues: Cell division protein SepF (197 aa).

Residues 15-89 form a disordered region; it reads EEEEVEGPEE…RMNNNSKNNS (75 aa). Basic and acidic residues predominate over residues 22–42; that stretch reads PEERESSRSRERVQEREDYNR. Positions 43–73 are enriched in polar residues; sequence NENQATPQTFNNKQQAIKSVPQKNTLRSNTT. Positions 80-89 are enriched in low complexity; that stretch reads RMNNNSKNNS.

Belongs to the SepF family. As to quaternary structure, homodimer. Interacts with FtsZ.

It is found in the cytoplasm. Cell division protein that is part of the divisome complex and is recruited early to the Z-ring. Probably stimulates Z-ring formation, perhaps through the cross-linking of FtsZ protofilaments. Its function overlaps with FtsA. This is Cell division protein SepF from Staphylococcus epidermidis (strain ATCC 35984 / DSM 28319 / BCRC 17069 / CCUG 31568 / BM 3577 / RP62A).